Here is a 636-residue protein sequence, read N- to C-terminus: Guanine-nucleotide exchange factor YEL1 (636 aa).

2 disordered regions span residues 1–29 (MTGLEGAQNLTVADKQLTPDEGVLTESPK) and 213–234 (RPPSQPRYSLSGRRTNGNGGHS). The region spanning 1–203 (MTGLEGAQNL…NRELSLCYYQ (203 aa)) is the SEC7 domain. Positions 333 to 475 (RKLMSWFRKH…ACCNFWSARI (143 aa)) constitute a PH domain.

It belongs to the YEL1 family.

The protein resides in the cytoplasm. Its subcellular location is the cell membrane. It is found in the bud neck. The protein localises to the bud tip. In terms of biological role, guanine nucleotide exchange factor for ARF3 required for localization of ARF3 to the bud neck and tip and involved in actin patch polarization. In Lachancea thermotolerans (strain ATCC 56472 / CBS 6340 / NRRL Y-8284) (Yeast), this protein is Guanine-nucleotide exchange factor YEL1 (YEL1).